A 310-amino-acid chain; its full sequence is Junctional adhesion molecule C (310 aa).

The first 29 residues, 1–29, serve as a signal peptide directing secretion; sequence MALSRRLRLRLYARLPDFFLLLLFRGCMI. At 30-241 the chain is on the extracellular side; it reads EAVNLKSSNR…GQDMEVYDLN (212 aa). The region spanning 35–127 is the Ig-like V-type domain; sequence KSSNRNPVVH…VALNDRKEVD (93 aa). Cystine bridges form between Cys-53–Cys-115 and Cys-160–Cys-219. 2 N-linked (GlcNAc...) asparagine glycosylation sites follow: Asn-104 and Asn-192. The region spanning 139–236 is the Ig-like C2-type domain; that stretch reads PVTPVCRIPA…AARCEGQDME (98 aa). A helical transmembrane segment spans residues 242 to 262; that stretch reads IAGIIGGVLVVLIVLAVITMG. Residues 263-310 lie on the Cytoplasmic side of the membrane; sequence ICCAYRRGCFISSKQDGESYKSPGKHDGVNYIRTSEEGDFRHKSSFVI. S-palmitoyl cysteine attachment occurs at residues Cys-264 and Cys-265.

The protein belongs to the immunoglobulin superfamily. Interacts with ITGAM. Interacts with GORASP2. Proteolytically cleaved from endothelial cells surface into a soluble form by ADAM10 and ADAM17; the release of soluble JAM3 is increased by pro-inflammatory factors. Post-translationally, N-glycosylated. In terms of processing, S-palmitoylated by ZDHHC7. S-palmitoylation promotes expression at tight junctions. Colocalizes with Jam2 near the lumen of seminiferous tubulues. Detected at junctional plaques that correspond to cell-cell contacts between spermatids and Sertoli cells. Detected on endothelial cells, in brain vessels and kidney glomeruli (at protein level). Detected in heart, lung, liver, kidney, testis, thymus, lymph node and Peyer patch. Endothelial cells.

The protein localises to the cell membrane. The protein resides in the cell junction. It is found in the desmosome. Its subcellular location is the tight junction. It localises to the secreted. In terms of biological role, junctional adhesion protein that mediates heterotypic cell-cell interactions with its cognate receptor JAM2 to regulate different cellular processes. Plays a role in homing and mobilization of hematopoietic stem and progenitor cells within the bone marrow. At the surface of bone marrow stromal cells, it contributes to the retention of the hematopoietic stem and progenitor cells expressing JAM3. Plays a central role in leukocytes extravasation by facilitating transmigration through the endothelium. Plays a role in spermatogenesis where JAM2 and JAM3, which are respectively expressed by Sertoli and germ cells, mediate an interaction between both cell types and play an essential role in the anchorage of germ cells onto Sertoli cells and the assembly of cell polarity complexes during spermatid differentiation. Also functions as a counter-receptor for ITGAM, mediating leukocyte-platelet interactions and is involved in the regulation of transepithelial migration of polymorphonuclear neutrophils (PMN). Plays a role in angiogenesis. Plays a role in the regulation of cell migration. During myogenesis, it is involved in myocyte fusion. Promotes chemotaxis of vascular endothelial cells and stimulates angiogenesis. In Mus musculus (Mouse), this protein is Junctional adhesion molecule C (Jam3).